A 460-amino-acid chain; its full sequence is L-seryl-tRNA(Sec) selenium transferase (460 aa).

N6-(pyridoxal phosphate)lysine is present on lysine 293.

It belongs to the SelA family. It depends on pyridoxal 5'-phosphate as a cofactor.

It localises to the cytoplasm. The catalysed reaction is L-seryl-tRNA(Sec) + selenophosphate + H(+) = L-selenocysteinyl-tRNA(Sec) + phosphate. It functions in the pathway aminoacyl-tRNA biosynthesis; selenocysteinyl-tRNA(Sec) biosynthesis; selenocysteinyl-tRNA(Sec) from L-seryl-tRNA(Sec) (bacterial route): step 1/1. Converts seryl-tRNA(Sec) to selenocysteinyl-tRNA(Sec) required for selenoprotein biosynthesis. This Haemophilus ducreyi (strain 35000HP / ATCC 700724) protein is L-seryl-tRNA(Sec) selenium transferase.